A 94-amino-acid polypeptide reads, in one-letter code: Citrate lyase acyl carrier protein (94 aa).

The residue at position 14 (S14) is an O-(phosphoribosyl dephospho-coenzyme A)serine.

The protein belongs to the CitD family. Oligomer with a subunit composition of (alpha,beta,gamma)6.

The protein localises to the cytoplasm. Its function is as follows. Covalent carrier of the coenzyme of citrate lyase. The protein is Citrate lyase acyl carrier protein of Fusobacterium nucleatum subsp. nucleatum (strain ATCC 25586 / DSM 15643 / BCRC 10681 / CIP 101130 / JCM 8532 / KCTC 2640 / LMG 13131 / VPI 4355).